The primary structure comprises 277 residues: Phosphoenolpyruvate synthase regulatory protein (277 aa).

157–164 (GVSRCGKT) contributes to the ADP binding site.

The protein belongs to the pyruvate, phosphate/water dikinase regulatory protein family. PSRP subfamily.

It carries out the reaction [pyruvate, water dikinase] + ADP = [pyruvate, water dikinase]-phosphate + AMP + H(+). The enzyme catalyses [pyruvate, water dikinase]-phosphate + phosphate + H(+) = [pyruvate, water dikinase] + diphosphate. Functionally, bifunctional serine/threonine kinase and phosphorylase involved in the regulation of the phosphoenolpyruvate synthase (PEPS) by catalyzing its phosphorylation/dephosphorylation. The chain is Phosphoenolpyruvate synthase regulatory protein from Shigella boydii serotype 4 (strain Sb227).